Consider the following 383-residue polypeptide: S-adenosylmethionine synthase 1 (383 aa).

ATP is bound at residue H15. A Mg(2+)-binding site is contributed by D17. Residue E43 coordinates K(+). Residues E56 and Q99 each coordinate L-methionine. A flexible loop region spans residues 99-109 (QSPDIDLGVSR). ATP-binding positions include 162–164 (DGK), 228–229 (RF), D237, 243–244 (RK), A260, and K264. L-methionine is bound at residue D237. K268 provides a ligand contact to L-methionine.

The protein belongs to the AdoMet synthase family. Homotetramer; dimer of dimers. Requires Mg(2+) as cofactor. K(+) serves as cofactor.

It localises to the cytoplasm. The catalysed reaction is L-methionine + ATP + H2O = S-adenosyl-L-methionine + phosphate + diphosphate. It participates in amino-acid biosynthesis; S-adenosyl-L-methionine biosynthesis; S-adenosyl-L-methionine from L-methionine: step 1/1. Its function is as follows. Catalyzes the formation of S-adenosylmethionine (AdoMet) from methionine and ATP. The overall synthetic reaction is composed of two sequential steps, AdoMet formation and the subsequent tripolyphosphate hydrolysis which occurs prior to release of AdoMet from the enzyme. The polypeptide is S-adenosylmethionine synthase 1 (Rhodospirillum rubrum (strain ATCC 11170 / ATH 1.1.1 / DSM 467 / LMG 4362 / NCIMB 8255 / S1)).